We begin with the raw amino-acid sequence, 395 residues long: Thyroid hormone receptor beta (395 aa).

The interval 1-31 (MSEQADKCNSRWKDEAMQNGYIPSYLDKDEL) is modulating. Residues 29–106 (DELCVVCGDK…VGMATDLVLD (78 aa)) constitute a DNA-binding region (nuclear receptor). Zn(2+)-binding residues include cysteine 32, cysteine 35, cysteine 49, cysteine 52, cysteine 70, cysteine 76, cysteine 86, and cysteine 89. 2 consecutive NR C4-type zinc fingers follow at residues 32–52 (CVVCGDKATGYHYRCITCEGC) and 70–89 (CKYEGKCVIDKVTRNQCQEC). In terms of domain architecture, NR LBD spans 142–395 (EEWEMIRVVT…PPLFLEVFED (254 aa)). Residues arginine 216, asparagine 265, and histidine 369 each contribute to the 3,3',5-triiodo-L-thyronine site.

This sequence belongs to the nuclear hormone receptor family. NR1 subfamily. In terms of assembly, interacts (via the ligand-binding domain) with ncoa2. As to expression, widely expressed in a range of adult tissues including the brain, eye, fin, gill, intestine, liver, swim bladder and ovary. In the eye, expressed in the outer nuclear layer of the retina.

It is found in the nucleus. Nuclear hormone receptor that can act as a repressor or activator of transcription. High affinity receptor for the thyroid gland hormone triiodothyronine (T3). Transactivating activity is ligand-dependent, and is repressed in the absence of T3. This chain is Thyroid hormone receptor beta (thrb), found in Danio rerio (Zebrafish).